The chain runs to 141 residues: Putative pre-16S rRNA nuclease (141 aa).

The protein belongs to the YqgF nuclease family.

Its subcellular location is the cytoplasm. In terms of biological role, could be a nuclease involved in processing of the 5'-end of pre-16S rRNA. The sequence is that of Putative pre-16S rRNA nuclease from Acetivibrio thermocellus (strain ATCC 27405 / DSM 1237 / JCM 9322 / NBRC 103400 / NCIMB 10682 / NRRL B-4536 / VPI 7372) (Clostridium thermocellum).